Consider the following 150-residue polypeptide: Monothiol glutaredoxin-S13 (150 aa).

The interval 30 to 52 (PSSSSSSLSWLTSGSPKPTSISN) is disordered. The span at 31-44 (SSSSSSLSWLTSGS) shows a compositional bias: low complexity. The Glutaredoxin domain maps to 53 to 149 (KRSSNLVVME…PTLRQAGALW (97 aa)). Residue cysteine 73 coordinates [2Fe-2S] cluster. A Responsive for interaction with TGA factors motif is present at residues 147 to 150 (ALWL).

It belongs to the glutaredoxin family. CC-type subfamily.

It localises to the cytoplasm. The protein resides in the nucleus. Its function is as follows. May only reduce GSH-thiol disulfides, but not protein disulfides. The protein is Monothiol glutaredoxin-S13 (GRXS13) of Arabidopsis thaliana (Mouse-ear cress).